Consider the following 528-residue polypeptide: Putative B3 domain-containing protein REM15 (528 aa).

DNA-binding regions (TF-B3) lie at residues 3–95 (HQHF…LGPS) and 135–231 (CFVA…LPNE). The tract at residues 234–253 (EEANEVSLPEEPESDAERNL) is disordered. 2 DNA-binding regions (TF-B3) span residues 279 to 376 (CFVA…IPNE) and 425 to 522 (QSSL…FCSK).

Its subcellular location is the nucleus. The chain is Putative B3 domain-containing protein REM15 (REM15.15) from Arabidopsis thaliana (Mouse-ear cress).